The chain runs to 282 residues: MTLFEAIVLGIVQGLTEFLPISSTAHLRIIPALAGWEDPGAAFTAIVQIGTLVAVLLYFWKDIFIIVAAVIEGIVQRKPLENSDAKMGWMIVAGTIPIVIFGKLFETQIDTTLRSLYWISGSLIGLAIILFLAEGKIKNRIKKELPLKAMENIGWKEALLIGLAQSIALIPGSSRSGVTITGGLFLNLDRATAARFSFLLSLPAVFAAGLYKLYQTWDIIVASPEHITNILVATLVAGIVGYASIAFLLNYLKKHTTTIFIAYRLVAGTAILYLVATGVLQP.

6 helical membrane passes run threonine 51–isoleucine 71, methionine 87–threonine 107, serine 115–glycine 135, alanine 191–tyrosine 211, asparagine 229–leucine 249, and isoleucine 259–valine 279.

Belongs to the UppP family.

The protein resides in the cell inner membrane. It carries out the reaction di-trans,octa-cis-undecaprenyl diphosphate + H2O = di-trans,octa-cis-undecaprenyl phosphate + phosphate + H(+). Functionally, catalyzes the dephosphorylation of undecaprenyl diphosphate (UPP). Confers resistance to bacitracin. In Pelodictyon phaeoclathratiforme (strain DSM 5477 / BU-1), this protein is Undecaprenyl-diphosphatase.